Consider the following 382-residue polypeptide: D-galactonate dehydratase (382 aa).

Aspartate 183 provides a ligand contact to Mg(2+). The active-site Proton donor is the histidine 185. Glutamate 209 and glutamate 235 together coordinate Mg(2+). Histidine 285 functions as the Proton acceptor in the catalytic mechanism.

It belongs to the mandelate racemase/muconate lactonizing enzyme family. GalD subfamily. It depends on Mg(2+) as a cofactor.

It catalyses the reaction D-galactonate = 2-dehydro-3-deoxy-D-galactonate + H2O. It functions in the pathway carbohydrate acid metabolism; D-galactonate degradation; D-glyceraldehyde 3-phosphate and pyruvate from D-galactonate: step 1/3. Catalyzes the dehydration of D-galactonate to 2-keto-3-deoxy-D-galactonate. The sequence is that of D-galactonate dehydratase from Escherichia coli O9:H4 (strain HS).